The primary structure comprises 193 residues: MSVIPMVVEQTSRGERSYDIYSRLLKERVIFLTGEVEDRMANLIVAQLLFLEAEDPAKDINIYINSPGGSVTAGMAIYDTMQFIKPNVRTLCIGQACSMGAFLLAGGTAGKRAALPHARVMIHQPLGGFRGQASDIQIHAQEILKIKQTLNERLAFHTGQSIEQIEQDTDRDNFMSAEQAKLYGLVDDVLIKR.

Catalysis depends on serine 98, which acts as the Nucleophile. Histidine 123 is a catalytic residue.

It belongs to the peptidase S14 family. As to quaternary structure, fourteen ClpP subunits assemble into 2 heptameric rings which stack back to back to give a disk-like structure with a central cavity, resembling the structure of eukaryotic proteasomes.

The protein localises to the cytoplasm. The catalysed reaction is Hydrolysis of proteins to small peptides in the presence of ATP and magnesium. alpha-casein is the usual test substrate. In the absence of ATP, only oligopeptides shorter than five residues are hydrolyzed (such as succinyl-Leu-Tyr-|-NHMec, and Leu-Tyr-Leu-|-Tyr-Trp, in which cleavage of the -Tyr-|-Leu- and -Tyr-|-Trp bonds also occurs).. Functionally, cleaves peptides in various proteins in a process that requires ATP hydrolysis. Has a chymotrypsin-like activity. Plays a major role in the degradation of misfolded proteins. The protein is ATP-dependent Clp protease proteolytic subunit of Histophilus somni (strain 2336) (Haemophilus somnus).